A 162-amino-acid chain; its full sequence is Phenazine biosynthesis protein PhzB 2 (162 aa).

Thr91 carries the post-translational modification Phosphothreonine.

This sequence belongs to the PhzA/PhzB family.

In terms of biological role, involved in the biosynthesis of the antibiotic phenazine, a nitrogen-containing heterocyclic molecule having important roles in virulence, competition and biological control. This chain is Phenazine biosynthesis protein PhzB 2 (phzB2), found in Pseudomonas aeruginosa (strain UCBPP-PA14).